A 406-amino-acid chain; its full sequence is Tryptophan synthase beta chain (406 aa).

Lys-99 is subject to N6-(pyridoxal phosphate)lysine.

It belongs to the TrpB family. As to quaternary structure, tetramer of two alpha and two beta chains. The cofactor is pyridoxal 5'-phosphate.

The enzyme catalyses (1S,2R)-1-C-(indol-3-yl)glycerol 3-phosphate + L-serine = D-glyceraldehyde 3-phosphate + L-tryptophan + H2O. It functions in the pathway amino-acid biosynthesis; L-tryptophan biosynthesis; L-tryptophan from chorismate: step 5/5. Its function is as follows. The beta subunit is responsible for the synthesis of L-tryptophan from indole and L-serine. The chain is Tryptophan synthase beta chain from Methylobacterium sp. (strain 4-46).